Consider the following 1204-residue polypeptide: MEMEQVNALCEELVKAVTVMMDPSSTQRYRLEALKFCEEFKEKCPICVPCGLKLAEKTQIAIVRHFGLQILEHVVKFRWNSMSRLEKVYLKNSVMELIANGTLRILEEENHIKDVLSRIVVEMIKREWPQHWPDMLMELDTLFRQGETQRELVMFILLRLAEDVVTFQTLPTQRRRDIQQTLTQNMERILNFLLNTLQENVNKYQQMKTDSSQEAEAQANCRVSVAALNTLAGYIDWVSLNHITAENCKLVETLCLLLNEQELQLGAAECLLIAVSRKGKLEDRKRLMILFGDVAMHYILSAAQTADGGGLVEKHYLFLKRLCQVLCALGNLLCALLALDANIQTPINFGMYLESFLAFTTHPSQFLRSSTHMTWGALFRHEVLSRDPALLAVIPKYLRASMTNLVKMGFPSKTDSPSCEYSRFDFDSDEDFNAFFNSSRAQHGEVVRCVCRLDPKTSFQMAAEWLKYQLSASIDTGPVNSCSTAGTGEGGFCSIFSPSYVQWEAMTFFLESVINQMFRTLDKEELPVSDGIELLQLVLNFEIKDPLVLSCVLTNVSALFPFVTYKPAFLPQVFSKLFSFVTFESVGESKAPRTRAVRNVRRHACSSINKMCRDYPDLVLPNFDMLYSHVKQLLSNELLLTQMEKCALMEALVLVSNQFKDYERQKLFLEELMAPVVNIWLSEEMCRALSDIDSFIAYVGADLKSCDPAVEDPCGLNRARMSFCVYSILGVMRRTSWPSDLEEAKAGGFVVGYTPSGNPIFRNPCTEQILRLLDNLLALVRTHNTLYTPEMLTKMAEPFTKALDIVESEKTAILGLPQPLLEFNDHPVYRTTLERMQRFFGILYENCYHILGKAGPSMQQDFYTVEDLASQLLGSAFVNLNNIPDFRLRSMLRVFVKPLVLFCPSEHYETLISPILGPLFTYLHMRLSQKWHVINQRSILCGEDEIAEDNPESQEMLEEQLVRMLTREAMDLIMACCVSKKTADHTAAPTADGDDEEMMATEVAPSSVVELTDLGKCLMKHEDVCTALLITAFNSLTWKDTLSCQRATTQLCWPLLKQVMSGTLLADAVTWLFTSVLKGLQMHGQHDGCMASLVHLAFQIYEALRPRYLEIRAVMEQIPEINKESLDQFDCKLLNPSLQKAADKRRKDHFKRLIAGCIGKPLGEQFRKEVHIKNLPWLFKKPKPMLETEVLDSEEGGLATIFEP.

Residues 1–108 (MEMEQVNALC…ANGTLRILEE (108 aa)) form a necessary for interaction with Ran region. The residue at position 396 (Lys-396) is an N6-acetyllysine. The necessary for interaction with ILF3 stretch occupies residues 533-640 (ELLQLVLNFE…KQLLSNELLL (108 aa)). Residues 641 to 642 (TQ) form a pre-siRNA binding region.

It belongs to the exportin family. In terms of assembly, component of a nuclear export receptor complex composed of XPO5, RAN, dsRNA-binding proteins and dsRNA. Found in a nuclear export complex with XPO5, RAN, EEF1A1, and aminoacylated tRNA. Found in a nuclear export complex with XPO5, RAN, ILF3 and dsRNA. Found in a nuclear export complex with XPO5, RAN and pre-miRNA. Found in a nuclear export complex with XPO5, RAN, ILF3 and minihelix VA1 dsRNA. Found in a nuclear export complex with XPO5, RAN, ILF3, ZNF346 and dsRNA. Interacts with EEF1A1, ILF3, NUP153, NUP214 and ZNF346. Interacts with RAN and cargo proteins in a GTP-dependent manner. Interacts with ADAR/ADAR1 (via DRBM domains). Interacts with SMAD4; mediates nuclear export of SMAD4. Interacts with RAN (GTP-bound form).

It is found in the nucleus. It localises to the cytoplasm. Functionally, mediates the nuclear export of proteins bearing a double-stranded RNA binding domain (dsRBD) and double-stranded RNAs (cargos). XPO5 in the nucleus binds cooperatively to the RNA and to the GTPase Ran in its active GTP-bound form. Proteins containing dsRBDs can associate with this trimeric complex through the RNA. Docking of this complex to the nuclear pore complex (NPC) is mediated through binding to nucleoporins. Upon transit of a nuclear export complex into the cytoplasm, hydrolysis of Ran-GTP to Ran-GDP (induced by RANBP1 and RANGAP1, respectively) cause disassembly of the complex and release of the cargo from the export receptor. XPO5 then returns to the nuclear compartment by diffusion through the nuclear pore complex, to mediate another round of transport. The directionality of nuclear export is thought to be conferred by an asymmetric distribution of the GTP- and GDP-bound forms of Ran between the cytoplasm and nucleus. Overexpression may in some circumstances enhance RNA-mediated gene silencing (RNAi). Mediates nuclear export of ADAR/ADAR1 in a RanGTP-dependent manner. In terms of biological role, mediates the nuclear export of micro-RNA precursors, which form short hairpins. Also mediates the nuclear export of synthetic short hairpin RNAs used for RNA interference. In some circumstances can also mediate the nuclear export of deacylated and aminoacylated tRNAs. Specifically recognizes dsRNAs that lack a 5'-overhang in a sequence-independent manner, have only a short 3'-overhang, and that have a double-stranded length of at least 15 base-pairs. Binding is dependent on Ran-GTP. The sequence is that of Exportin-5 (Xpo5) from Mus musculus (Mouse).